Consider the following 259-residue polypeptide: Haloacid dehalogenase-like hydrolase domain-containing protein 2 (259 aa).

Asp13 and Asn15 together coordinate Mg(2+). Substrate contacts are provided by residues 13–15 (DLN) and 46–47 (TN). Positions 47–72 (NTTKESKKDLLERLKKLEFEISEDEI) form a coiled coil. Lys50 is modified (N6-succinyllysine). A substrate-binding site is contributed by Lys179. Residue Asp204 coordinates Mg(2+).

This sequence belongs to the HAD-like hydrolase superfamily. Mg(2+) serves as cofactor.

The protein is Haloacid dehalogenase-like hydrolase domain-containing protein 2 (Hdhd2) of Mus musculus (Mouse).